A 132-amino-acid chain; its full sequence is Small ribosomal subunit protein uS8c (132 aa).

Belongs to the universal ribosomal protein uS8 family. As to quaternary structure, part of the 30S ribosomal subunit.

The protein localises to the plastid. It is found in the chloroplast. Its function is as follows. One of the primary rRNA binding proteins, it binds directly to 16S rRNA central domain where it helps coordinate assembly of the platform of the 30S subunit. This Ceratophyllum demersum (Rigid hornwort) protein is Small ribosomal subunit protein uS8c (rps8).